We begin with the raw amino-acid sequence, 267 residues long: Diphthine--ammonia ligase (267 aa).

Tyrosine 97 carries the phosphotyrosine modification.

It belongs to the Diphthine--ammonia ligase family.

It catalyses the reaction diphthine-[translation elongation factor 2] + NH4(+) + ATP = diphthamide-[translation elongation factor 2] + AMP + diphosphate + H(+). The protein operates within protein modification; peptidyl-diphthamide biosynthesis. Functionally, amidase that catalyzes the last step of diphthamide biosynthesis using ammonium and ATP. Diphthamide biosynthesis consists in the conversion of an L-histidine residue in the translation elongation factor eEF-2 (EEF2) to diphthamide. The chain is Diphthine--ammonia ligase (Dph6) from Rattus norvegicus (Rat).